Here is a 293-residue protein sequence, read N- to C-terminus: 33 kDa chaperonin (293 aa).

2 disulfide bridges follow: C238–C240 and C271–C274.

The protein belongs to the HSP33 family. Post-translationally, under oxidizing conditions two disulfide bonds are formed involving the reactive cysteines. Under reducing conditions zinc is bound to the reactive cysteines and the protein is inactive.

It localises to the cytoplasm. In terms of biological role, redox regulated molecular chaperone. Protects both thermally unfolding and oxidatively damaged proteins from irreversible aggregation. Plays an important role in the bacterial defense system toward oxidative stress. The chain is 33 kDa chaperonin from Clostridium beijerinckii (strain ATCC 51743 / NCIMB 8052) (Clostridium acetobutylicum).